A 619-amino-acid polypeptide reads, in one-letter code: Auxin efflux carrier component 7 (619 aa).

At 1 to 7 the chain is on the extracellular side; that stretch reads MITWHDL. The chain crosses the membrane as a helical span at residues 8–28; the sequence is YTVLTAVIPLYVAMILAYGSV. At 29 to 38 the chain is on the cytoplasmic side; the sequence is RWWKIFSPDQ. A helical membrane pass occupies residues 39-59; the sequence is CSGINRFVAIFAVPLLSFHFI. (indol-3-yl)acetate is bound at residue V51. Over 60 to 71 the chain is Extracellular; that stretch reads SSNNPYAMNLRF. A helical membrane pass occupies residues 72 to 92; the sequence is IAADTLQKLIMLTLLIIWANF. At 93–101 the chain is on the cytoplasmic side; sequence TRSGSLEWS. The chain crosses the membrane as a helical span at residues 102-122; the sequence is ITIFSLSTLPNTLVMGIPLLI. (indol-3-yl)acetate contacts are provided by N112 and L114. Topologically, residues 123–131 are extracellular; sequence AMYGEYSGS. A helical transmembrane segment spans residues 132–152; it reads LMVQIVVLQCIIWYTLLLFLF. (indol-3-yl)acetate is bound at residue Y145. At 153 to 479 the chain is on the cytoplasmic side; sequence EYRGAKILIM…LIRNPNTYSS (327 aa). A phosphoserine mark is found at S229, S246, and S286. A disordered region spans residues 306-340; the sequence is GAPGSYPAPNPEFSTGNKTGSKAPKENHHHVGKSN. T320 is subject to Phosphothreonine. Position 357 is a phosphoserine (S357). The segment at 393–413 is disordered; sequence HTQNGENKAGPMNGDYGGEEE. Residues 480–500 traverse the membrane as a helical segment; sequence LIGLIWALVAFRWDVAMPKII. Over 501 to 503 the chain is Extracellular; that stretch reads QQS. A helical membrane pass occupies residues 504-524; that stretch reads ISILSDAGLGMAMFSLGLFMA. The Cytoplasmic portion of the chain corresponds to 525–538; sequence LQPKLIACGNSTAT. The chain crosses the membrane as a helical span at residues 539–559; sequence FAMAVRFFTGPAVMAVAAMAI. The Extracellular portion of the chain corresponds to 560–564; that stretch reads GLRGD. A helical transmembrane segment spans residues 565-585; sequence LLRVAIVQAALPQGIVPFVFA. I579 and V580 together coordinate (indol-3-yl)acetate. Topologically, residues 586 to 598 are cytoplasmic; sequence KEYNVHPAILSTG. The helical transmembrane segment at 599-619 threads the bilayer; that stretch reads VIFGMLIALPITLVYYILLGL.

The protein belongs to the auxin efflux carrier (TC 2.A.69.1) family. In terms of assembly, homodimer.

Its subcellular location is the cell membrane. Functionally, acts as a component of the auxin efflux carrier. Mediates the initial auxin gradient which contributes to the establishment of the apical-basal axis in early embryogenesis. Together with PIN3 and PIN4, involved in the connective auxin transport (CAT) that ensures communication across the shoot system, and modulates strigolactone-mediated shoot branching control. The abcb19 pin3 pin4 pin7 quadruple mutant exhibits an additive phenotype on strigolactone-mediated bud outgrowth responses and shoot branching control. The polypeptide is Auxin efflux carrier component 7 (Arabidopsis thaliana (Mouse-ear cress)).